Reading from the N-terminus, the 295-residue chain is Secreted frizzled-related protein 2 (295 aa).

The first 24 residues, 1–24 (MLQGPGSLLLLFLASHCCLGSARG), serve as a signal peptide directing secretion. One can recognise an FZ domain in the interval 35–155 (YKRSNCKPIP…PQDNDLCIPL (121 aa)). 8 disulfide bridges follow: cysteine 40–cysteine 103, cysteine 50–cysteine 96, cysteine 87–cysteine 125, cysteine 114–cysteine 152, cysteine 118–cysteine 142, cysteine 172–cysteine 245, cysteine 175–cysteine 247, and cysteine 190–cysteine 295. The 124-residue stretch at 172–295 (CEACKNKNDD…ISRSIRKLQC (124 aa)) folds into the NTR domain.

It belongs to the secreted frizzled-related protein (sFRP) family. Expressed in adipose tissue, heart, brain, skeletal muscle, pancreas, thymus, prostate, testis, ovary, small intestine and colon. Highest levels in adipose tissue, small intestine and colon.

Its subcellular location is the secreted. Soluble frizzled-related proteins (sFRPS) function as modulators of Wnt signaling through direct interaction with Wnts. They have a role in regulating cell growth and differentiation in specific cell types. SFRP2 may be important for eye retinal development and for myogenesis. The sequence is that of Secreted frizzled-related protein 2 (SFRP2) from Homo sapiens (Human).